The following is a 369-amino-acid chain: Histidinol-phosphate aminotransferase 3 (369 aa).

Position 220 is an N6-(pyridoxal phosphate)lysine (K220).

This sequence belongs to the class-II pyridoxal-phosphate-dependent aminotransferase family. Histidinol-phosphate aminotransferase subfamily. In terms of assembly, homodimer. Pyridoxal 5'-phosphate serves as cofactor.

The catalysed reaction is L-histidinol phosphate + 2-oxoglutarate = 3-(imidazol-4-yl)-2-oxopropyl phosphate + L-glutamate. Its pathway is amino-acid biosynthesis; L-histidine biosynthesis; L-histidine from 5-phospho-alpha-D-ribose 1-diphosphate: step 7/9. The polypeptide is Histidinol-phosphate aminotransferase 3 (hisC3) (Mesorhizobium japonicum (strain LMG 29417 / CECT 9101 / MAFF 303099) (Mesorhizobium loti (strain MAFF 303099))).